Consider the following 442-residue polypeptide: Serine--tRNA ligase (442 aa).

An L-serine-binding site is contributed by 249 to 251 (TSE). 280 to 282 (RSE) lines the ATP pocket. Glu303 serves as a coordination point for L-serine. ATP is bound at residue 367-370 (EISS). An L-serine-binding site is contributed by Ser402.

The protein belongs to the class-II aminoacyl-tRNA synthetase family. Type-1 seryl-tRNA synthetase subfamily. In terms of assembly, homodimer. The tRNA molecule binds across the dimer.

Its subcellular location is the cytoplasm. The catalysed reaction is tRNA(Ser) + L-serine + ATP = L-seryl-tRNA(Ser) + AMP + diphosphate + H(+). The enzyme catalyses tRNA(Sec) + L-serine + ATP = L-seryl-tRNA(Sec) + AMP + diphosphate + H(+). Its pathway is aminoacyl-tRNA biosynthesis; selenocysteinyl-tRNA(Sec) biosynthesis; L-seryl-tRNA(Sec) from L-serine and tRNA(Sec): step 1/1. Its function is as follows. Catalyzes the attachment of serine to tRNA(Ser). Is also able to aminoacylate tRNA(Sec) with serine, to form the misacylated tRNA L-seryl-tRNA(Sec), which will be further converted into selenocysteinyl-tRNA(Sec). In Acidovorax sp. (strain JS42), this protein is Serine--tRNA ligase.